We begin with the raw amino-acid sequence, 270 residues long: NADPH-dependent aldehyde reductase-like protein, chloroplastic (270 aa).

The N-terminal 53 residues, 1-53 (MSTHSSISQPPLPLAGRVAIVTGSSRGIGRAIAIHLAELGARIVINYTSKAAD), are a transit peptide targeting the chloroplast. Residue 26–50 (RGIGRAIAIHLAELGARIVINYTSK) participates in NADP(+) binding. Residue serine 165 participates in substrate binding. Residue tyrosine 178 is the Proton acceptor of the active site.

It belongs to the short-chain dehydrogenases/reductases (SDR) family.

Its subcellular location is the plastid. It is found in the chloroplast. Functionally, aldehyde reductase that catalyzes the reduction of the aldehyde carbonyl groups on saturated and alpha,beta-unsaturated aldehydes with more than 5 carbons. The chain is NADPH-dependent aldehyde reductase-like protein, chloroplastic from Arabidopsis thaliana (Mouse-ear cress).